We begin with the raw amino-acid sequence, 158 residues long: Snaclec crotocetin-1 (158 aa).

The signal sequence occupies residues 1–23 (MGRFIFVSFGLLVVFLSLSGTGA). Cystine bridges form between Cys27-Cys38, Cys55-Cys152, and Cys127-Cys144. Positions 34-153 (YDQYCYRVIK…CEEKNLFVCK (120 aa)) constitute a C-type lectin domain.

Belongs to the snaclec family. Heterodimer; disulfide-linked. As to expression, expressed by the venom gland.

Its subcellular location is the secreted. Functionally, interferes with one step of hemostasis (modulation of platelet aggregation, or coagulation cascade, for example). The polypeptide is Snaclec crotocetin-1 (Crotalus durissus terrificus (South American rattlesnake)).